Reading from the N-terminus, the 102-residue chain is Large ribosomal subunit protein bL21 (102 aa).

It belongs to the bacterial ribosomal protein bL21 family. In terms of assembly, part of the 50S ribosomal subunit. Contacts protein L20.

Functionally, this protein binds to 23S rRNA in the presence of protein L20. The sequence is that of Large ribosomal subunit protein bL21 from Arthrobacter sp. (strain FB24).